The sequence spans 126 residues: MSWQTYVDTNLVGTGAVTQAAILGLDGNTWATSAGFAVTPAQGQTLASAFNNADPIRASGFDLAGVHYVTLRADDRSIYGKKGSAGVITVKTSKSILVGVYNEKIQPGTAANVVEKLADYLIGQGF.

The actin binding stretch occupies residues 2-36; the sequence is SWQTYVDTNLVGTGAVTQAAILGLDGNTWATSAGF. K104 carries the post-translational modification N6,N6,N6-trimethyllysine.

This sequence belongs to the profilin family. In terms of assembly, occurs in many kinds of cells as a complex with monomeric actin in a 1:1 ratio.

Its subcellular location is the cytoplasm. The protein resides in the cytoskeleton. In terms of biological role, binds to actin and affects the structure of the cytoskeleton. At high concentrations, profilin prevents the polymerization of actin, whereas it enhances it at low concentrations. By binding to PIP2, it inhibits the formation of IP3 and DG. In Acanthamoeba castellanii (Amoeba), this protein is Profilin-1A.